The following is a 240-amino-acid chain: uncharacterized protein (240 aa).

The C2H2-type zinc finger occupies 3–27; that stretch reads LKCLECDKLLSSIEMAEFHSTKTSH. Disordered stretches follow at residues 21–43 and 120–171; these read HSTK…RSPE and AEIE…RFSI. The segment covering 120–136 has biased composition (basic and acidic residues); it reads AEIERDKKRRAAERENK. A compositionally biased stretch (low complexity) spans 155–166; the sequence is SSSTCTRTPPTS.

This is an uncharacterized protein from Schizosaccharomyces pombe (strain 972 / ATCC 24843) (Fission yeast).